Consider the following 61-residue polypeptide: Small ribosomal subunit protein uS14 (61 aa).

4 residues coordinate Zn(2+): Cys-24, Cys-27, Cys-40, and Cys-43.

This sequence belongs to the universal ribosomal protein uS14 family. Zinc-binding uS14 subfamily. In terms of assembly, part of the 30S ribosomal subunit. Contacts proteins S3 and S10. Requires Zn(2+) as cofactor.

Functionally, binds 16S rRNA, required for the assembly of 30S particles and may also be responsible for determining the conformation of the 16S rRNA at the A site. In Helicobacter pylori (strain G27), this protein is Small ribosomal subunit protein uS14.